The chain runs to 438 residues: Adenylyltransferase and sulfurtransferase UBA4 (438 aa).

ATP-binding positions include Gly81, Asp102, 109-113 (SNLHR), Lys126, and 170-171 (DH). 2 residues coordinate Zn(2+): Cys212 and Cys215. Cys229 functions as the Glycyl thioester intermediate; for adenylyltransferase activity in the catalytic mechanism. Zn(2+)-binding residues include Cys290 and Cys293. The Rhodanese domain occupies 340 to 436 (NKKKHILIDV…WSDDVDSKIP (97 aa)). Cys396 serves as the catalytic Cysteine persulfide intermediate; for sulfurtransferase activity.

The protein in the N-terminal section; belongs to the HesA/MoeB/ThiF family. UBA4 subfamily. Requires Zn(2+) as cofactor.

It localises to the cytoplasm. Its subcellular location is the cytosol. Its pathway is tRNA modification; 5-methoxycarbonylmethyl-2-thiouridine-tRNA biosynthesis. Plays a central role in 2-thiolation of mcm(5)S(2)U at tRNA wobble positions of cytosolic tRNA(Lys), tRNA(Glu) and tRNA(Gln). Acts by mediating the C-terminal thiocarboxylation of sulfur carrier URM1. Its N-terminus first activates URM1 as acyl-adenylate (-COAMP), then the persulfide sulfur on the catalytic cysteine is transferred to URM1 to form thiocarboxylation (-COSH) of its C-terminus. The reaction probably involves hydrogen sulfide that is generated from the persulfide intermediate and that acts as a nucleophile towards URM1. Subsequently, a transient disulfide bond is formed. Does not use thiosulfate as sulfur donor; NFS1 probably acting as a sulfur donor for thiocarboxylation reactions. Prior mcm(5) tRNA modification by the elongator complex is required for 2-thiolation. May also be involved in protein urmylation. The protein is Adenylyltransferase and sulfurtransferase UBA4 of Candida albicans (strain SC5314 / ATCC MYA-2876) (Yeast).